A 165-amino-acid polypeptide reads, in one-letter code: UPF0763 protein NIS_0363 (165 aa).

This sequence belongs to the UPF0763 family.

This Nitratiruptor sp. (strain SB155-2) protein is UPF0763 protein NIS_0363.